The sequence spans 127 residues: Small ribosomal subunit protein uS12 (127 aa).

Asp89 bears the 3-methylthioaspartic acid mark. The segment at Ala101–Lys127 is disordered. Over residues Thr111–Lys127 the composition is skewed to basic residues.

It belongs to the universal ribosomal protein uS12 family. Part of the 30S ribosomal subunit. Contacts proteins S8 and S17. May interact with IF1 in the 30S initiation complex.

In terms of biological role, with S4 and S5 plays an important role in translational accuracy. Interacts with and stabilizes bases of the 16S rRNA that are involved in tRNA selection in the A site and with the mRNA backbone. Located at the interface of the 30S and 50S subunits, it traverses the body of the 30S subunit contacting proteins on the other side and probably holding the rRNA structure together. The combined cluster of proteins S8, S12 and S17 appears to hold together the shoulder and platform of the 30S subunit. The chain is Small ribosomal subunit protein uS12 from Flavobacterium psychrophilum (strain ATCC 49511 / DSM 21280 / CIP 103535 / JIP02/86).